The chain runs to 389 residues: Chalcone synthase H2 (389 aa).

Cys-164 is an active-site residue.

The protein belongs to the thiolase-like superfamily. Chalcone/stilbene synthases family.

The protein localises to the cytoplasm. It catalyses the reaction (E)-4-coumaroyl-CoA + 3 malonyl-CoA + 3 H(+) = 2',4,4',6'-tetrahydroxychalcone + 3 CO2 + 4 CoA. It participates in secondary metabolite biosynthesis; flavonoid biosynthesis. Functionally, involved in the biosynthesis of prenylated phenolics natural products which contribute to the bitter taste of beer and display broad biological activities. Chalcone synthase that can use 4-coumaroyl-CoA to produce 4,2',4',6'-tetrahydroxychalcone (also termed naringenin-chalcone or chalcone) which can, under specific conditions, spontaneously isomerize into naringenin. The polypeptide is Chalcone synthase H2 (Humulus lupulus (European hop)).